Consider the following 142-residue polypeptide: Transmembrane protein 170A (142 aa).

Residues 1–48 (MEGGGGGLGGEPGLLQQILSLRLVPRVGNVTDCQRATLCSFPEMWYGV) lie on the Lumenal side of the membrane. An N-linked (GlcNAc...) asparagine glycan is attached at asparagine 29. A helical transmembrane segment spans residues 49–69 (FLWALVSSLFFHIPAGLLALF). Residues 70 to 78 (TLRHHKYGR) lie on the Cytoplasmic side of the membrane. A helical membrane pass occupies residues 79–99 (FMSVGIFLMGVLGPISAGILT). Residues 100-114 (SAAIAGVYKAAGKEM) are Lumenal-facing. A helical transmembrane segment spans residues 115–135 (IPFEALVLGVGQTFCVLIVSF). The Cytoplasmic segment spans residues 136 to 142 (LRILATL).

It belongs to the TMEM170 family.

It is found in the endoplasmic reticulum membrane. It localises to the nucleus envelope. In terms of biological role, may regulate membrane morphogenesis in the endoplasmic reticulum (ER) by promoting ER sheet formation at the expense of ER tubules. In Xenopus laevis (African clawed frog), this protein is Transmembrane protein 170A (tmem170a).